A 922-amino-acid polypeptide reads, in one-letter code: NEDD4-like E3 ubiquitin-protein ligase WWP1 (922 aa).

The region spanning 1–116 (MATASPRSDT…IHNRKLERVK (116 aa)) is the C2 domain. Polar residues-rich tracts occupy residues 210–219 (GDNTPSSPSQ), 243–278 (NGES…STTV), 286–302 (ILTS…TSAE), 314–323 (DTSNSRSSSA), and 340–351 (RQQSGNANTETL). The disordered stretch occupies residues 210-388 (GDNTPSSPSQ…RPQPLPPGWE (179 aa)). 4 WW domains span residues 349-382 (ETLP…RPQP), 381-414 (QPLP…RPTM), 456-489 (GPLP…DPRT), and 496-529 (EPLP…DPRN). The required for interaction with and ubiquitination of AMOTL2. Required for interaction with YAP1 stretch occupies residues 349 to 531 (ETLPSGWEQR…TTFKDPRNGK (183 aa)). The HECT domain maps to 588-922 (KPYDLRRRLY…IEETEGFGQE (335 aa)). The active-site Glycyl thioester intermediate is C890.

Interacts with the Crumbs complex components PALS1 and PATJ; interaction with the Crumbs complex is enhanced by WWP1's interaction with AMOTL2 and facilitates WWP1 localization to the plasma membrane. Interaction with the Crumbs complex promotes WWP1 monoubiquitination of AMOTL2, which activates the Hippo signaling pathway. Binds KLF2 and HIVEP3. Binds SCNN1A, SCNN1B, SCNN1G, WBP1, WBP2, DRPLA and adenovirus type 2 PIII. Interacts with RNF11. Interacts with SPART. Interacts with ERBB4 isoforms JM-B CYT-1 and JM-A CYT-1. Interacts with SMAD1, SMAD2, SMAD3, SMAD5, SMAD6, SMAD7, TGFBR1 and TGFBR2. Associates with the TGFBR1:TGFBR2 receptor complex in presence of SMAD7. Interacts with SKIL isoform 1. Interacts with TP63 isoform 1 and isoform 2. Interacts with STAMBP and RNF11. Interacts with NDFIP1 and NDFIP2; this interaction activates the E3 ubiquitin-protein ligase. Interacts with TGIF. Interacts (via WW domains) with ARRDC1, ARRDC2 and ARRDC3. In terms of assembly, (Microbial infection) Interacts with HTLV-1 protein Gag. As to quaternary structure, (Microbial infection) Interacts with ebola virus protein VP40. Post-translationally, auto-ubiquitinated and ubiquitinated by RNF11. As to expression, detected in heart, placenta, pancreas, kidney, liver, skeletal muscle, bone marrow, fetal brain, and at much lower levels in adult brain and lung. Isoform 1 and isoform 5 predominate in all tissues tested, except in testis and bone marrow, where isoform 5 is expressed at much higher levels than isoform 1.

It localises to the cytoplasm. Its subcellular location is the cell membrane. It is found in the nucleus. The protein localises to the cell junction. The catalysed reaction is S-ubiquitinyl-[E2 ubiquitin-conjugating enzyme]-L-cysteine + [acceptor protein]-L-lysine = [E2 ubiquitin-conjugating enzyme]-L-cysteine + N(6)-ubiquitinyl-[acceptor protein]-L-lysine.. Its pathway is protein modification; protein ubiquitination. Its activity is regulated as follows. Activated by NDFIP1- and NDFIP2-binding. Its function is as follows. E3 ubiquitin-protein ligase which accepts ubiquitin from an E2 ubiquitin-conjugating enzyme in the form of a thioester and then directly transfers the ubiquitin to targeted substrates. Ubiquitinates ERBB4 isoforms JM-A CYT-1 and JM-B CYT-1, KLF2, KLF5 and TP63 and promotes their proteasomal degradation. Ubiquitinates RNF11 without targeting it for degradation. Ubiquitinates and promotes degradation of TGFBR1; the ubiquitination is enhanced by SMAD7. Ubiquitinates SMAD6 and SMAD7. Ubiquitinates and promotes degradation of SMAD2 in response to TGF-beta signaling, which requires interaction with TGIF. Activates the Hippo signaling pathway in response to cell contact inhibition and recruitment to the Crumbs complex at the cell membrane. Monoubiquitinates AMOTL2 which facilitates its interaction with and activation of LATS2. LATS2 then phosphorylates YAP1, excluding it from the nucleus and therefore ultimately represses YAP1-driven transcription of target genes. In Homo sapiens (Human), this protein is NEDD4-like E3 ubiquitin-protein ligase WWP1 (WWP1).